We begin with the raw amino-acid sequence, 120 residues long: MSVDLAFDEQELLPAVAQDAESGDVLMLAYVSEEAVARSRETGYAHYYSRSREELWKKGGSSGHTQEIEEIRVDCDGDAILYLVEQAGGACHTGYDTCFHRTLDGDIVGEQVFDPEEIYE.

Aspartate 74 is a binding site for Mg(2+). Position 75 (cysteine 75) interacts with Zn(2+). Residues aspartate 76 and aspartate 78 each contribute to the Mg(2+) site. Zn(2+) is bound by residues cysteine 91 and cysteine 98.

Belongs to the PRA-CH family. In terms of assembly, homodimer. Requires Mg(2+) as cofactor. Zn(2+) is required as a cofactor.

It localises to the cytoplasm. It carries out the reaction 1-(5-phospho-beta-D-ribosyl)-5'-AMP + H2O = 1-(5-phospho-beta-D-ribosyl)-5-[(5-phospho-beta-D-ribosylamino)methylideneamino]imidazole-4-carboxamide. The protein operates within amino-acid biosynthesis; L-histidine biosynthesis; L-histidine from 5-phospho-alpha-D-ribose 1-diphosphate: step 3/9. Its function is as follows. Catalyzes the hydrolysis of the adenine ring of phosphoribosyl-AMP. This Natronomonas pharaonis (strain ATCC 35678 / DSM 2160 / CIP 103997 / JCM 8858 / NBRC 14720 / NCIMB 2260 / Gabara) (Halobacterium pharaonis) protein is Phosphoribosyl-AMP cyclohydrolase.